The chain runs to 144 residues: Large ribosomal subunit protein uL13 (144 aa).

Belongs to the universal ribosomal protein uL13 family. In terms of assembly, part of the 50S ribosomal subunit.

Functionally, this protein is one of the early assembly proteins of the 50S ribosomal subunit, although it is not seen to bind rRNA by itself. It is important during the early stages of 50S assembly. The polypeptide is Large ribosomal subunit protein uL13 (Lachnoclostridium phytofermentans (strain ATCC 700394 / DSM 18823 / ISDg) (Clostridium phytofermentans)).